We begin with the raw amino-acid sequence, 906 residues long: uncharacterized protein (906 aa).

2 disordered regions span residues 231–322 (KEDA…PSTI) and 865–906 (AGAY…DEDE). The segment covering 236–250 (TTKQTTTTTTTTPQT) has biased composition (low complexity). Over residues 264–281 (TPTPAPAPKPTTPKPTPA) the composition is skewed to pro residues. The span at 302–314 (SVNNIPTPSDTNE) shows a compositional bias: polar residues. Residues 867–906 (AYEDDDDDEGEGNEDDEDNDENEDEDEGEGEGDSSEDEDE) are compositionally biased toward acidic residues.

This is an uncharacterized protein from Dictyostelium sp. (strain GA11) (Slime mold).